A 208-amino-acid chain; its full sequence is Interleukin-6 (208 aa).

A signal peptide spans 1–27 (MTFLSTSAFSPLAFSLGLLLVVATAFP). An intrachain disulfide couples C68 to C74. S77 carries the phosphoserine modification. An intrachain disulfide couples C97 to C107.

Belongs to the IL-6 superfamily. As to quaternary structure, component of a hexamer of two molecules each of IL6, IL6R and IL6ST; first binds to IL6R to associate with the signaling subunit IL6ST. Interacts with IL6R (via the N-terminal ectodomain); this interaction may be affected by IL6R-binding with SORL1, hence decreasing IL6 cis signaling. Interacts with SORL1 (via the N-terminal ectodomain); this interaction leads to IL6 internalization and lysosomal degradation. May form a trimeric complex with the soluble SORL1 ectodomain and soluble IL6R receptor; this interaction might stabilize circulating IL6, hence promoting IL6 trans signaling.

It localises to the secreted. Functionally, cytokine with a wide variety of biological functions in immunity, tissue regeneration, and metabolism. Binds to IL6R, then the complex associates to the signaling subunit IL6ST/gp130 to trigger the intracellular IL6-signaling pathway. The interaction with the membrane-bound IL6R and IL6ST stimulates 'classic signaling', whereas the binding of IL6 and soluble IL6R to IL6ST stimulates 'trans-signaling'. Alternatively, 'cluster signaling' occurs when membrane-bound IL6:IL6R complexes on transmitter cells activate IL6ST receptors on neighboring receiver cells. In terms of biological role, IL6 is a potent inducer of the acute phase response. Rapid production of IL6 contributes to host defense during infection and tissue injury, but excessive IL6 synthesis is involved in disease pathology. In the innate immune response, is synthesized by myeloid cells, such as macrophages and dendritic cells, upon recognition of pathogens through toll-like receptors (TLRs) at the site of infection or tissue injury. In the adaptive immune response, is required for the differentiation of B cells into immunoglobulin-secreting cells. Plays a major role in the differentiation of CD4(+) T cell subsets. Essential factor for the development of T follicular helper (Tfh) cells that are required for the induction of germinal-center formation. Required to drive naive CD4(+) T cells to the Th17 lineage. Also required for proliferation of myeloma cells and the survival of plasmablast cells. Acts as an essential factor in bone homeostasis and on vessels directly or indirectly by induction of VEGF, resulting in increased angiogenesis activity and vascular permeability. Induces, through 'trans-signaling' and synergistically with IL1B and TNF, the production of VEGF. Involved in metabolic controls, is discharged into the bloodstream after muscle contraction increasing lipolysis and improving insulin resistance. 'Trans-signaling' in central nervous system also regulates energy and glucose homeostasis. Mediates, through GLP-1, crosstalk between insulin-sensitive tissues, intestinal L cells and pancreatic islets to adapt to changes in insulin demand. Also acts as a myokine. Plays a protective role during liver injury, being required for maintenance of tissue regeneration. Also has a pivotal role in iron metabolism by regulating HAMP/hepcidin expression upon inflammation or bacterial infection. Through activation of IL6ST-YAP-NOTCH pathway, induces inflammation-induced epithelial regeneration. The polypeptide is Interleukin-6 (IL6) (Felis catus (Cat)).